The following is a 325-amino-acid chain: Cln5-like protein 2 (325 aa).

Residues 1 to 19 (MNKLIFIIICLGIVDKTIS) form the signal peptide. Asn88, Asn117, Asn133, Asn163, Asn182, Asn189, Asn238, and Asn262 each carry an N-linked (GlcNAc...) asparagine glycan.

This sequence belongs to the CLN5 family.

This Dictyostelium discoideum (Social amoeba) protein is Cln5-like protein 2 (cln5lb).